A 65-amino-acid chain; its full sequence is Large ribosomal subunit protein bL35 (65 aa).

The disordered stretch occupies residues 1 to 22 (MPKMKTKSSAKKRFKVTGSGKI).

Belongs to the bacterial ribosomal protein bL35 family.

The chain is Large ribosomal subunit protein bL35 from Flavobacterium psychrophilum (strain ATCC 49511 / DSM 21280 / CIP 103535 / JIP02/86).